Reading from the N-terminus, the 286-residue chain is Deleted in azoospermia-like (286 aa).

The 76-residue stretch at 30 to 105 (NTVFVGGIDI…KKLKLGPAIR (76 aa)) folds into the RRM domain. Residues 155–180 (ACPYPSSPPMAIQQIPVGCQQPSYFQ) enclose the DAZ domain.

This sequence belongs to the RRM DAZ family. As to quaternary structure, interacts with the C-terminus of pabp1 and with epabp. Prior to oocyte maturation, found in a complex with epabp and pum2 proteins and spdy1 mRNA; pum2 dissociates from the complex during maturation. Germ-line specific; expressed in adult testis and ovary. Localized specifically to the oocyte and embryonic germ plasm and to migrating primordial germ cells (PGCs).

It is found in the cytoplasm. In terms of biological role, RNA-binding protein that is required for primordial germ cell (PGC) differentiation and indirectly necessary for the migration of PGCs through the endoderm. May promote meiotic cell division during spermatogenesis. Shows a preference for G- and U-rich RNAs and probably binds the 3'-UTR of target mRNAs. Stimulates the initiation of translation of mRNAs through the recruitment of poly(A)-binding proteins (PABPs). This chain is Deleted in azoospermia-like, found in Xenopus tropicalis (Western clawed frog).